A 295-amino-acid chain; its full sequence is Tyrosine recombinase XerD (295 aa).

The 85-residue stretch at 1–85 (MNTIIEEYLN…TIRSFHQFAL (85 aa)) folds into the Core-binding (CB) domain. The region spanning 106 to 289 (KLPDVLEIDE…SKSQIRKMYT (184 aa)) is the Tyr recombinase domain. Residues Arg-146, Lys-170, His-241, Arg-244, and His-267 contribute to the active site. The active-site O-(3'-phospho-DNA)-tyrosine intermediate is the Tyr-276.

This sequence belongs to the 'phage' integrase family. XerD subfamily. Forms a cyclic heterotetrameric complex composed of two molecules of XerC and two molecules of XerD.

It localises to the cytoplasm. In terms of biological role, site-specific tyrosine recombinase, which acts by catalyzing the cutting and rejoining of the recombining DNA molecules. The XerC-XerD complex is essential to convert dimers of the bacterial chromosome into monomers to permit their segregation at cell division. It also contributes to the segregational stability of plasmids. This Staphylococcus epidermidis (strain ATCC 35984 / DSM 28319 / BCRC 17069 / CCUG 31568 / BM 3577 / RP62A) protein is Tyrosine recombinase XerD.